A 209-amino-acid polypeptide reads, in one-letter code: Small ribosomal subunit protein uS4 (209 aa).

Positions 99 to 160 (ARLDSVAYRM…RARASLRCKA (62 aa)) constitute an S4 RNA-binding domain.

Belongs to the universal ribosomal protein uS4 family. Part of the 30S ribosomal subunit. Contacts protein S5. The interaction surface between S4 and S5 is involved in control of translational fidelity.

In terms of biological role, one of the primary rRNA binding proteins, it binds directly to 16S rRNA where it nucleates assembly of the body of the 30S subunit. Functionally, with S5 and S12 plays an important role in translational accuracy. This chain is Small ribosomal subunit protein uS4, found in Dechloromonas aromatica (strain RCB).